A 286-amino-acid chain; its full sequence is MPELPEVETVRKGLEKRLKNFYIDNVEVLSERSIASNGGSNVFIFNLKDLVFGRWSRRGKYLIASLCKESDLIEEIPSGTLVVHLRMTGYFEWHQNTKAPCTHTRVRFWNKKGSEIRFIDIRNFGQMWWIPPNKLPSEVINGLKNLGPEPFSKDFNPEYLKYCLKGRKRSIKSSLLDQSILAGVGNIYADESLFEAGITPIKASGDLNGCELKKLCKSLTRILKASIGKGGTTFSDFRDLEGLNGTYGGYAWVYRRNQKPCRKCGTLIEKTKVAGRSTHWCPNCQN.

Pro-2 (schiff-base intermediate with DNA) is an active-site residue. Glu-3 acts as the Proton donor in catalysis. Residue Lys-60 is the Proton donor; for beta-elimination activity of the active site. DNA is bound by residues His-103, Arg-122, and Arg-167. An FPG-type zinc finger spans residues 252 to 286 (WVYRRNQKPCRKCGTLIEKTKVAGRSTHWCPNCQN). Arg-276 acts as the Proton donor; for delta-elimination activity in catalysis.

Belongs to the FPG family. Monomer. The cofactor is Zn(2+).

The enzyme catalyses Hydrolysis of DNA containing ring-opened 7-methylguanine residues, releasing 2,6-diamino-4-hydroxy-5-(N-methyl)formamidopyrimidine.. It carries out the reaction 2'-deoxyribonucleotide-(2'-deoxyribose 5'-phosphate)-2'-deoxyribonucleotide-DNA = a 3'-end 2'-deoxyribonucleotide-(2,3-dehydro-2,3-deoxyribose 5'-phosphate)-DNA + a 5'-end 5'-phospho-2'-deoxyribonucleoside-DNA + H(+). Involved in base excision repair of DNA damaged by oxidation or by mutagenic agents. Acts as a DNA glycosylase that recognizes and removes damaged bases. Has a preference for oxidized purines, such as 7,8-dihydro-8-oxoguanine (8-oxoG). Has AP (apurinic/apyrimidinic) lyase activity and introduces nicks in the DNA strand. Cleaves the DNA backbone by beta-delta elimination to generate a single-strand break at the site of the removed base with both 3'- and 5'-phosphates. This Prochlorococcus marinus (strain MIT 9211) protein is Formamidopyrimidine-DNA glycosylase.